Reading from the N-terminus, the 512-residue chain is Krueppel-like factor 11 (512 aa).

The interval proline 109 to threonine 128 is disordered. Over residues serine 118 to threonine 128 the composition is skewed to polar residues. Phosphoserine is present on serine 124. 3 consecutive C2H2-type zinc fingers follow at residues tyrosine 394 to histidine 418, phenylalanine 424 to histidine 448, and phenylalanine 454 to histidine 476.

It belongs to the Sp1 C2H2-type zinc-finger protein family. As to quaternary structure, interacts with SIN3A. As to expression, ubiquitous. Higher expression in erythroid cells.

Its subcellular location is the nucleus. Functionally, transcription factor. Activates the epsilon- and gamma-globin gene promoters and, to a much lower degree, the beta-globin gene and represses promoters containing SP1-like binding inhibiting cell growth. Represses transcription of SMAD7 which enhances TGF-beta signaling. Induces apoptosis. In Homo sapiens (Human), this protein is Krueppel-like factor 11 (KLF11).